Here is a 381-residue protein sequence, read N- to C-terminus: Queuine tRNA-ribosyltransferase (381 aa).

Aspartate 89 serves as the catalytic Proton acceptor. Substrate is bound by residues 89–93 (DSGGF), aspartate 143, glutamine 187, and glycine 214. Residues 245 to 251 (GVGKPED) form an RNA binding region. Aspartate 264 serves as the catalytic Nucleophile. The tract at residues 269 to 273 (TRNAR) is RNA binding; important for wobble base 34 recognition. Cysteine 302, cysteine 304, cysteine 307, and histidine 333 together coordinate Zn(2+).

Belongs to the queuine tRNA-ribosyltransferase family. In terms of assembly, homodimer. Within each dimer, one monomer is responsible for RNA recognition and catalysis, while the other monomer binds to the replacement base PreQ1. Zn(2+) serves as cofactor.

The catalysed reaction is 7-aminomethyl-7-carbaguanine + guanosine(34) in tRNA = 7-aminomethyl-7-carbaguanosine(34) in tRNA + guanine. Its pathway is tRNA modification; tRNA-queuosine biosynthesis. Functionally, catalyzes the base-exchange of a guanine (G) residue with the queuine precursor 7-aminomethyl-7-deazaguanine (PreQ1) at position 34 (anticodon wobble position) in tRNAs with GU(N) anticodons (tRNA-Asp, -Asn, -His and -Tyr). Catalysis occurs through a double-displacement mechanism. The nucleophile active site attacks the C1' of nucleotide 34 to detach the guanine base from the RNA, forming a covalent enzyme-RNA intermediate. The proton acceptor active site deprotonates the incoming PreQ1, allowing a nucleophilic attack on the C1' of the ribose to form the product. After dissociation, two additional enzymatic reactions on the tRNA convert PreQ1 to queuine (Q), resulting in the hypermodified nucleoside queuosine (7-(((4,5-cis-dihydroxy-2-cyclopenten-1-yl)amino)methyl)-7-deazaguanosine). This chain is Queuine tRNA-ribosyltransferase, found in Pectobacterium atrosepticum (strain SCRI 1043 / ATCC BAA-672) (Erwinia carotovora subsp. atroseptica).